Here is a 337-residue protein sequence, read N- to C-terminus: MAVEMFYDDDADLSIIQGRKVAVIGYGSQGHAHSLSLRDSGVDVRIGLKEGSKSREKAQEQGLTVGTPAEVSEWADVIMVLAPDTAQASIFTNDIEPNLKDGDALFFGHGLNIHFDLIKAPEFVTVGMVAPKGPGHLVRRQFVDGKGVPALIAIDQDPKGEGQALALSYAKGIGGTRAGVIKTTFKEETETDLFGEQAVLCGGTEELVKTGFEVMVEAGYAPEMAYFEVLHELKLIVDLMYEGGIARMNYSVSDTAEFGGYLSGPRVIDADTKERMKAILADIQSGEFTRRLVANVENGNTELEGLRKANAEHPIEVTGKKLRDLMSWVDRPITETA.

The KARI N-terminal Rossmann domain maps to 3-183 (VEMFYDDDAD…GGTRAGVIKT (181 aa)). NADP(+) contacts are provided by residues 26–29 (YGSQ), Lys-49, Ser-52, Ser-54, and 84–87 (DTAQ). His-109 is an active-site residue. Gly-135 contacts NADP(+). The KARI C-terminal knotted domain maps to 184–329 (TFKEETETDL…KKLRDLMSWV (146 aa)). 4 residues coordinate Mg(2+): Asp-192, Glu-196, Glu-228, and Glu-232. Residue Ser-253 participates in substrate binding.

Belongs to the ketol-acid reductoisomerase family. Requires Mg(2+) as cofactor.

It catalyses the reaction (2R)-2,3-dihydroxy-3-methylbutanoate + NADP(+) = (2S)-2-acetolactate + NADPH + H(+). The catalysed reaction is (2R,3R)-2,3-dihydroxy-3-methylpentanoate + NADP(+) = (S)-2-ethyl-2-hydroxy-3-oxobutanoate + NADPH + H(+). It participates in amino-acid biosynthesis; L-isoleucine biosynthesis; L-isoleucine from 2-oxobutanoate: step 2/4. Its pathway is amino-acid biosynthesis; L-valine biosynthesis; L-valine from pyruvate: step 2/4. In terms of biological role, involved in the biosynthesis of branched-chain amino acids (BCAA). Catalyzes an alkyl-migration followed by a ketol-acid reduction of (S)-2-acetolactate (S2AL) to yield (R)-2,3-dihydroxy-isovalerate. In the isomerase reaction, S2AL is rearranged via a Mg-dependent methyl migration to produce 3-hydroxy-3-methyl-2-ketobutyrate (HMKB). In the reductase reaction, this 2-ketoacid undergoes a metal-dependent reduction by NADPH to yield (R)-2,3-dihydroxy-isovalerate. The sequence is that of Ketol-acid reductoisomerase (NADP(+)) from Rhodococcus erythropolis (strain PR4 / NBRC 100887).